We begin with the raw amino-acid sequence, 344 residues long: MFDIAPVSRERDEQIQACIDDKTKPRGALGALEPLAAHLARLLGEAPEIGRPAMLVFAADHGIASAGVSIAPPEVTGQMVANFAAGGAAINVFCRQLGWQLEIIDAGMLSAPPREMGVTDCRLGAGTGPIHKRAAMTLGQVEHGLAFGRERVRSHHAEGTNLIGLGEMGIGNTSSAAAVMAALMGLEAKDCVGRGTGVDAATLKRKQMLVEQALLLHLDMLTSPESVLACVGGFEIVEMTGAILGAAELGIPVLVDGFIATTAALAAVKMFPQSREYLIFAHRSAERAHGLMLAHMEAEPLLSLDMRLGEGTGAALALPLVQAAANFYREMASFSDAGITDVTP.

The Proton acceptor role is filled by Glu-310.

This sequence belongs to the CobT family.

It carries out the reaction 5,6-dimethylbenzimidazole + nicotinate beta-D-ribonucleotide = alpha-ribazole 5'-phosphate + nicotinate + H(+). The protein operates within nucleoside biosynthesis; alpha-ribazole biosynthesis; alpha-ribazole from 5,6-dimethylbenzimidazole: step 1/2. In terms of biological role, catalyzes the synthesis of alpha-ribazole-5'-phosphate from nicotinate mononucleotide (NAMN) and 5,6-dimethylbenzimidazole (DMB). This is Nicotinate-nucleotide--dimethylbenzimidazole phosphoribosyltransferase from Shewanella amazonensis (strain ATCC BAA-1098 / SB2B).